The following is a 340-amino-acid chain: Heat-inducible transcription repressor HrcA (340 aa).

This sequence belongs to the HrcA family.

Functionally, negative regulator of class I heat shock genes (grpE-dnaK-dnaJ and groELS operons). Prevents heat-shock induction of these operons. In Mycoplasmopsis synoviae (strain 53) (Mycoplasma synoviae), this protein is Heat-inducible transcription repressor HrcA.